A 206-amino-acid polypeptide reads, in one-letter code: 2-phospho-L-lactate guanylyltransferase (206 aa).

This sequence belongs to the CofC family. As to quaternary structure, homodimer.

The enzyme catalyses (2S)-2-phospholactate + GTP + H(+) = (2S)-lactyl-2-diphospho-5'-guanosine + diphosphate. It functions in the pathway cofactor biosynthesis; coenzyme F420 biosynthesis. In terms of biological role, guanylyltransferase that catalyzes the activation of (2S)-2-phospholactate (2-PL) as (2S)-lactyl-2-diphospho-5'-guanosine, via the condensation of 2-PL with GTP. It is involved in the biosynthesis of coenzyme F420, a hydride carrier cofactor. The polypeptide is 2-phospho-L-lactate guanylyltransferase (Archaeoglobus fulgidus (strain ATCC 49558 / DSM 4304 / JCM 9628 / NBRC 100126 / VC-16)).